The primary structure comprises 116 residues: Putative UPF0320 protein YJR162C (116 aa).

This sequence belongs to the UPF0320 family.

The protein is Putative UPF0320 protein YJR162C of Saccharomyces cerevisiae (strain ATCC 204508 / S288c) (Baker's yeast).